A 301-amino-acid chain; its full sequence is Troponin T, cardiac muscle (301 aa).

Composition is skewed to acidic residues over residues 1 to 42 (MSDL…EEEA) and 50 to 74 (AETEETQAEEDGQEEEDKEDEDGPV). Disordered regions lie at residues 1–99 (MSDL…GERV) and 125–223 (ENRK…KKKK). At Ser2 the chain carries N-acetylserine. Ser2 carries the phosphoserine; by CK2 modification. Residues 82–93 (RPFMPNLVPPKI) are compositionally biased toward pro residues. Basic and acidic residues-rich tracts occupy residues 125–186 (ENRK…DEAR) and 206–223 (QTERKSGKRQTEREKKKK). Phosphothreonine; by PKC/PRKCA is present on Thr207. At Ser211 the chain carries Phosphoserine; by PKC/PRKCA. Phosphothreonine; by PKC/PRKCA and RAF1 is present on Thr216. Thr297 carries the phosphothreonine; by PKC/PRKCA modification.

The protein belongs to the troponin T family. In terms of assembly, binds with troponins I and C to make the thin-filament regulatory complex, troponin. Phosphorylation at Thr-216 by PRKCA induces significant reduction in myofilament calcium sensitivity and actomyosin ATPase activity. The major isoform in adult heart is CTNT4.

Functionally, troponin T is the tropomyosin-binding subunit of troponin, the thin filament regulatory complex which confers calcium-sensitivity to striated muscle actomyosin ATPase activity. In Oryctolagus cuniculus (Rabbit), this protein is Troponin T, cardiac muscle (TNNT2).